Reading from the N-terminus, the 595-residue chain is MLLTTGHARARPEQQQASADEPLEAKPEDGHSLTAPRPADDELATVAPTTTPVPAVAITQGATTGAATEATHSQPVVTAVPATSSTSTSTTVPAPLLPAAPEQPEYLKHCFYADEHLCMYGHDGQGNEAPDVLGHISTTPESDSQGIGLQVNASQGNSQNLERNANSCQCHEHPAKANSWYCCNISQMSMISSCSNISKWTNLHVRNLTVRTIDLSNPIFRSLQSLAVTDGNITRLINAFPRHSALKCLNISNNNISEIPSRMFKDVPHLEFFGMSRNNLSLVPHHNQNKNITVDISGNMRMLCNPLNEIINNDSFNFVNPKHSYCLYNATHEWFQSTDLVSVEQLESTKRCMTKCPVIPNYGSCKCRFESIMIIQDDQSKPKCHVDCSNLGLVELPPRLPDNTFVLNITNNKITSLGDHFQTNPTYHNINRLVADNNQISSIYEFEGTKFIENFQRIYMRNNSLSKIPEYFLNNALMDTGRRIYLAGNKLQCDCNSAKTLQNWLKERSTDIPDYMEIRCRNIPQSVIELQEAKLCQSPPDWTDYIYYLIAAEVILLLGLITKVSYDYWVFKTSGYLPWPASKMPKLPCDWLCES.

Disordered stretches follow at residues 1 to 42 (MLLT…ADDE) and 64 to 98 (TGAATEATHSQPVVTAVPATSSTSTSTTVPAPLLP). Residues Asn-250 and Asn-255 are each glycosylated (N-linked (GlcNAc...) asparagine). The 56-residue stretch at 347–402 (ESTKRCMTKCPVIPNYGSCKCRFESIMIIQDDQSKPKCHVDCSNLGLVELPPRLPD) folds into the LRRNT domain. LRR repeat units follow at residues 403–424 (NTFVLNITNNKITSLGDHFQTN), 429–450 (NINRLVADNNQISSIYEFEGTK), and 454–475 (NFQRIYMRNNSLSKIPEYFLNN). The LRRCT domain occupies 489 to 538 (NKLQCDCNSAKTLQNWLKERSTDIPDYMEIRCRNIPQSVIELQEAKLCQS).

Has a role in the ecdysone induced cascade; probably indirect control of 'late' ecdysone genes. In Drosophila pseudoobscura pseudoobscura (Fruit fly), this protein is Protein halfway (hfw).